The chain runs to 287 residues: Ethylene-inducing xylanase 3 (287 aa).

Residues 1–19 (MVCFSSLFVAASAIAVVFA) form the signal peptide. The 189-residue stretch at 31 to 219 (QSTPSSQGTH…SSGSARINVA (189 aa)) folds into the GH11 domain. Residue E115 is the Nucleophile of the active site. The Proton donor role is filled by E206. The 36-residue stretch at 252–287 (SCAARWGQCGGSGWNGATCCSAGTCQAQNQWYSQCL) folds into the CBM1 domain.

This sequence belongs to the glycosyl hydrolase 11 (cellulase G) family.

The catalysed reaction is Endohydrolysis of (1-&gt;4)-beta-D-xylosidic linkages in xylans.. The protein operates within glycan degradation; xylan degradation. In terms of biological role, endo-1,4-beta-xylanase involved in the hydrolysis of xylan, a major structural heterogeneous polysaccharide found in plant biomass representing the second most abundant polysaccharide in the biosphere, after cellulose. Exhibits immunity-inducing activity and induces cell death in Nicotiana benthamiana. This Verticillium longisporum (Verticillium dahliae var. longisporum) protein is Ethylene-inducing xylanase 3.